The following is a 187-amino-acid chain: MKHHSLIFLTGFSGSGKSTIGPLLANSLGFEFIDLDREIELAAGKSINRIFAEDGEAAFRELELRTLERIGSQKEMVVSLGGGVLENDRCFELIRRTGTLVYMKSSPEILSLRLQHKTDRPLLKGPNGEKLSREQVEQRISEILEKREPRYQKADLIIVTDSKKIGSTVEEMTRKIERHIRRVERDS.

14-19 (GSGKST) is a binding site for ATP. A Mg(2+)-binding site is contributed by Ser18. Residues Asp36, Arg60, and Gly82 each coordinate substrate. Residue Arg120 coordinates ATP. Arg147 lines the substrate pocket.

It belongs to the shikimate kinase family. Monomer. Mg(2+) is required as a cofactor.

It is found in the cytoplasm. It catalyses the reaction shikimate + ATP = 3-phosphoshikimate + ADP + H(+). It functions in the pathway metabolic intermediate biosynthesis; chorismate biosynthesis; chorismate from D-erythrose 4-phosphate and phosphoenolpyruvate: step 5/7. Catalyzes the specific phosphorylation of the 3-hydroxyl group of shikimic acid using ATP as a cosubstrate. The polypeptide is Shikimate kinase (Chlorobaculum parvum (strain DSM 263 / NCIMB 8327) (Chlorobium vibrioforme subsp. thiosulfatophilum)).